The following is a 313-amino-acid chain: Porphobilinogen deaminase (313 aa).

Position 242 is an S-(dipyrrolylmethanemethyl)cysteine (Cys242).

Belongs to the HMBS family. Monomer. The cofactor is dipyrromethane.

It catalyses the reaction 4 porphobilinogen + H2O = hydroxymethylbilane + 4 NH4(+). It functions in the pathway porphyrin-containing compound metabolism; protoporphyrin-IX biosynthesis; coproporphyrinogen-III from 5-aminolevulinate: step 2/4. In terms of biological role, tetrapolymerization of the monopyrrole PBG into the hydroxymethylbilane pre-uroporphyrinogen in several discrete steps. This is Porphobilinogen deaminase from Klebsiella pneumoniae (strain 342).